Here is a 347-residue protein sequence, read N- to C-terminus: Phosphoribosylformylglycinamidine cyclo-ligase (347 aa).

It belongs to the AIR synthase family.

The protein resides in the cytoplasm. The enzyme catalyses 2-formamido-N(1)-(5-O-phospho-beta-D-ribosyl)acetamidine + ATP = 5-amino-1-(5-phospho-beta-D-ribosyl)imidazole + ADP + phosphate + H(+). Its pathway is purine metabolism; IMP biosynthesis via de novo pathway; 5-amino-1-(5-phospho-D-ribosyl)imidazole from N(2)-formyl-N(1)-(5-phospho-D-ribosyl)glycinamide: step 2/2. This Bacillus cytotoxicus (strain DSM 22905 / CIP 110041 / 391-98 / NVH 391-98) protein is Phosphoribosylformylglycinamidine cyclo-ligase.